Reading from the N-terminus, the 265-residue chain is Insulin-like growth factor-binding protein 2-B (265 aa).

The first 17 residues, 1 to 17 (MSLALLCSLLLVHGSLG), serve as a signal peptide directing secretion. In terms of domain architecture, IGFBP N-terminal spans 19 to 99 (IVFRCPSCTA…IQGLGRCENK (81 aa)). 6 disulfide bridges follow: C23-C49, C26-C51, C34-C52, C41-C55, C63-C76, and C70-C96. Residues 107–122 (TNQESAAHSGEVNGTR) are compositionally biased toward polar residues. 2 disordered regions span residues 107–128 (TNQE…PMKK) and 144–170 (HHNN…SQCQ). Positions 166–248 (QSQCQQELDK…SDKVRGDPNC (83 aa)) constitute a Thyroglobulin type-1 domain. 3 disulfide bridges follow: C169-C203, C214-C225, and C227-C248. The segment at 238–265 (SSDKVRGDPNCSQYYGGPELEPPTAQQK) is disordered. Residues 243–245 (RGD) carry the Cell attachment site motif.

Interacts with igf2. Interacts with igf1. As to expression, in early embryos, expressed at a low level in most tissues with expression becoming abundant in the liver by 96 hours post-fertilization (hpf). The expression pattern in adults exhibits sexual dimorphism; in adult males expression is limited exclusively to the liver whereas in adult females expression is observed in the liver and other tissues including the gut, kidney, ovary and muscle.

Its subcellular location is the secreted. Functionally, IGF-binding proteins prolong the half-life of the IGFs and have been shown to either inhibit or stimulate the growth promoting effects of the IGFs on cell culture. They alter the interaction of IGFs with their cell surface receptors. The protein is Insulin-like growth factor-binding protein 2-B of Danio rerio (Zebrafish).